We begin with the raw amino-acid sequence, 520 residues long: MFIAAVTHNWMERLAALSLLHYVLGAIFLLLLFHMLSNFFHPGLVDVPGPFAAKFTDLWRLFKVWQRRFKEDLPGLHASHRSTLIRIGPRMVSCSDPRAVELIYGFHTEFSKSDMVKAMAPIYKGKKQPTMFAAADNKTHARIRKPVAGAYAMTSIMQRMDELFIRPKRACDIHNWVQYFAFDMVLEMTMSRNLGFMKAGGDVDGVLKQLQKDLDYRGIALAMPIIDRIWRLNPVSKFFKPKQSGHFAMRCKRILEDRMAYEKSLDSRTQQQQDQKPHDFAHRFLEAQRKDPSISDGQLIGYMQANLIAGSDTTAVVMRTAIYYTLKQPWILQRLVTELDQYHGPLPVPFRIARFEMPFCGAIVREALRRHFAFIGMMERQTPPCGVVMPDGRRLPGGVVIGMHGDLIGRDRAIFGEDADEFNPLRWLARPGEPEAKYQERLRAMNAHDLAFGHGPRGCIGKHVAEMEIYKFIPTFFALIQPRFMRPEQSWTVRQLFVFKQSGMDMMLDWRQGKGLQSMA.

Residues 16–36 traverse the membrane as a helical segment; sequence ALSLLHYVLGAIFLLLLFHML. N-linked (GlcNAc...) asparagine glycosylation occurs at Asn-137. Cys-459 serves as a coordination point for heme.

The protein belongs to the cytochrome P450 family. It depends on heme as a cofactor.

The protein resides in the membrane. The protein operates within secondary metabolite biosynthesis; terpenoid biosynthesis. Its function is as follows. Cytochrome P450 monooxygenase; part of the gene cluster that mediates the biosynthesis of viridicatumtoxin, a tetracycline-like fungal meroterpenoid with a unique, fused spirobicyclic ring system. The first step of the pathway is the production of the malonamoyl-CoA starter unit for the polyketide synthase vrtA. The aldolase vrtJ may be involved in the synthesis of the malonamate substrate for malonamoyl-CoA synthetase vrtB. The polyketide synthase vrtA then may utilize the malonamoyl-CoA starter unit, followed by sequential condensation of eight malonyl-CoA units to form the polyketide backbone. The cyclization of the last ring could be mediated by the lactamase-like protein vrtG. The proposed post-PKS tailoring steps are a hydroxylation at C5 catalyzed the cytochrome P450 monooxygenase vrtE, a hydroxylation at C12a catalyzed by VrtH and/or VrtI, and an O-methylation by the O-methyltransferase vrtF. VrtC is then proposed to catalyze the transfer of a geranyl group synthesized by vrtD to the aromatic C ring of the tetracyclic polyketide intermediate of viridicatumtoxin to yield previridicatumtoxin. Finally, the cytochrome P450 monooxygenase vrtK catalyzes the spirocyclization of the geranyl moiety of previridicatumtoxin to afford viridicatumtoxin. This chain is Cytochrome P450 monooxygenase vrtE, found in Penicillium aethiopicum.